The sequence spans 448 residues: Bifunctional protein GlmU (448 aa).

The interval 1 to 232 (MSDRSLLVVV…ADEVAGVNSR (232 aa)) is pyrophosphorylase. Residues 11–14 (LAAG), lysine 25, glutamine 78, and 83–84 (GT) each bind UDP-N-acetyl-alpha-D-glucosamine. Aspartate 108 lines the Mg(2+) pocket. The UDP-N-acetyl-alpha-D-glucosamine site is built by glycine 144, glutamate 158, asparagine 173, and asparagine 230. Asparagine 230 contributes to the Mg(2+) binding site. The tract at residues 233 to 253 (VQLAEAEAILQRRLRLAAMAG) is linker. An N-acetyltransferase region spans residues 254–448 (GATLVAPETV…FRAARSKPKG (195 aa)). UDP-N-acetyl-alpha-D-glucosamine contacts are provided by arginine 319 and lysine 337. Catalysis depends on histidine 349, which acts as the Proton acceptor. The UDP-N-acetyl-alpha-D-glucosamine site is built by tyrosine 352 and asparagine 363. Acetyl-CoA is bound by residues alanine 366, 372-373 (NY), threonine 409, and arginine 426.

It in the N-terminal section; belongs to the N-acetylglucosamine-1-phosphate uridyltransferase family. This sequence in the C-terminal section; belongs to the transferase hexapeptide repeat family. As to quaternary structure, homotrimer. The cofactor is Mg(2+).

It is found in the cytoplasm. The enzyme catalyses alpha-D-glucosamine 1-phosphate + acetyl-CoA = N-acetyl-alpha-D-glucosamine 1-phosphate + CoA + H(+). The catalysed reaction is N-acetyl-alpha-D-glucosamine 1-phosphate + UTP + H(+) = UDP-N-acetyl-alpha-D-glucosamine + diphosphate. The protein operates within nucleotide-sugar biosynthesis; UDP-N-acetyl-alpha-D-glucosamine biosynthesis; N-acetyl-alpha-D-glucosamine 1-phosphate from alpha-D-glucosamine 6-phosphate (route II): step 2/2. It participates in nucleotide-sugar biosynthesis; UDP-N-acetyl-alpha-D-glucosamine biosynthesis; UDP-N-acetyl-alpha-D-glucosamine from N-acetyl-alpha-D-glucosamine 1-phosphate: step 1/1. It functions in the pathway bacterial outer membrane biogenesis; LPS lipid A biosynthesis. Catalyzes the last two sequential reactions in the de novo biosynthetic pathway for UDP-N-acetylglucosamine (UDP-GlcNAc). The C-terminal domain catalyzes the transfer of acetyl group from acetyl coenzyme A to glucosamine-1-phosphate (GlcN-1-P) to produce N-acetylglucosamine-1-phosphate (GlcNAc-1-P), which is converted into UDP-GlcNAc by the transfer of uridine 5-monophosphate (from uridine 5-triphosphate), a reaction catalyzed by the N-terminal domain. The protein is Bifunctional protein GlmU of Xanthobacter autotrophicus (strain ATCC BAA-1158 / Py2).